The primary structure comprises 117 residues: MDKKASRIRRATRARRKIAELGATRLVVHRTPRHVYAQVIASNGSEVIAAASTVEKAIREQVKNTGNVDAAKAVGKAIAERALEKGVETVAFDRSGFQYHGRVAALAESAREAGLKF.

This sequence belongs to the universal ribosomal protein uL18 family. Part of the 50S ribosomal subunit; part of the 5S rRNA/L5/L18/L25 subcomplex. Contacts the 5S and 23S rRNAs.

In terms of biological role, this is one of the proteins that bind and probably mediate the attachment of the 5S RNA into the large ribosomal subunit, where it forms part of the central protuberance. This is Large ribosomal subunit protein uL18 from Vibrio proteolyticus (Aeromonas proteolytica).